The primary structure comprises 288 residues: Homoserine kinase (288 aa).

Position 79 to 89 (79 to 89) interacts with ATP; sequence PPARGLGSSSA.

The protein belongs to the GHMP kinase family. Homoserine kinase subfamily.

It is found in the cytoplasm. It carries out the reaction L-homoserine + ATP = O-phospho-L-homoserine + ADP + H(+). It participates in amino-acid biosynthesis; L-threonine biosynthesis; L-threonine from L-aspartate: step 4/5. Its function is as follows. Catalyzes the ATP-dependent phosphorylation of L-homoserine to L-homoserine phosphate. The polypeptide is Homoserine kinase (Listeria monocytogenes serotype 4a (strain HCC23)).